The following is a 72-amino-acid chain: UPF0270 protein YheU (72 aa).

Belongs to the UPF0270 family.

This chain is UPF0270 protein YheU, found in Shigella dysenteriae serotype 1 (strain Sd197).